An 89-amino-acid polypeptide reads, in one-letter code: Small ribosomal subunit protein uS14A (89 aa).

This sequence belongs to the universal ribosomal protein uS14 family. In terms of assembly, part of the 30S ribosomal subunit. Contacts proteins S3 and S10.

In terms of biological role, binds 16S rRNA, required for the assembly of 30S particles and may also be responsible for determining the conformation of the 16S rRNA at the A site. This Listeria welshimeri serovar 6b (strain ATCC 35897 / DSM 20650 / CCUG 15529 / CIP 8149 / NCTC 11857 / SLCC 5334 / V8) protein is Small ribosomal subunit protein uS14A.